The primary structure comprises 494 residues: MASGILVNVKEEVTCPICLELLTQPLSLDCGHSFCQACLTANHKTSMPDEGERSCPVCRISYQHKNIQPNRHVANIVEKLREVKLSPEEGQKVDHCARHGEKLLLFCQEDRKVICWLCERSQEHRGHHTFLTEEVAQEYQVKLQAALQMLRQKQQEAEELEADIREEKASWKTQIQYDKTNILADFEQLRHILDWVESNELQNLEKEEKDVLKRLMRSEIEMVQQTQSVRELISDLEHRLQGSVMELLQGVDGVIKRMKNVTLKKPETFPKNRRRVFRAADLKVMLEVLRELRDVRRYWVDVTVAPNNISYAVISEDMRQVSSPEPQIIFEAQGTISQTFVNFNYCTGILGSQSITSGKHYWEVDVSKKSAWILGVCAGFQPDAMYNIEQNENYQPKYGYWVIGLEEGVKCNAFQDGSIHTPSAPFIVPLSVNICPDRVGVFLDYEACTVSFFNITNHGFLIYKFSHCSFSQPVFPYLNPRKCTVPMTLCSPSS.

Position 2 is an N-acetylalanine (A2). An RING-type zinc finger spans residues C15 to R59. S86 carries the post-translational modification Phosphoserine. Residues Q91 to E133 form a B box-type zinc finger. Residues C96, H99, C118, and H124 each contribute to the Zn(2+) site. The stretch at T132 to Q241 forms a coiled coil. A required for interaction with GABARAP and for autophagy region spans residues F186–N199. In terms of domain architecture, B30.2/SPRY spans L282–S494.

It belongs to the TRIM/RBCC family. In terms of assembly, can form homodimers and homotrimers. In addition to lower-order dimerization, also exhibits a higher-order multimerization and both low- and high-order multimerizations are essential for its restriction activity. Interacts with BTBD1 and BTBD2. Interacts with PSMC4, PSMC5, PSMD7 and HSPA8/HSC70. Interacts (via B30.2/SPRY domain) with HSPA1A/B. Interacts with PSMC2, MAP3K7/TAK1, TAB2 and TAB3. Interacts with SQSTM1. Interacts with TRIM6 and TRIM34. Interacts with ULK1 (phosphorylated form), GABARAP, GABARAPL1, GABARAPL2, MAP1LC3A, MAP1LC3C and BECN1. Degraded in a proteasome-independent fashion in the absence of viral infection but in a proteasome-dependent fashion following exposure to restriction sensitive virus. Post-translationally, autoubiquitinated in a RING finger- and UBE2D2-dependent manner. Monoubiquitinated by TRIM21. Deubiquitinated by Yersinia YopJ. Ubiquitination may not lead to proteasomal degradation.

It localises to the cytoplasm. Its subcellular location is the nucleus. The enzyme catalyses S-ubiquitinyl-[E2 ubiquitin-conjugating enzyme]-L-cysteine + [acceptor protein]-L-lysine = [E2 ubiquitin-conjugating enzyme]-L-cysteine + N(6)-ubiquitinyl-[acceptor protein]-L-lysine.. It functions in the pathway protein modification; protein ubiquitination. Capsid-specific restriction factor that prevents infection from non-host-adapted retroviruses. Blocks viral replication early in the life cycle, after viral entry but before reverse transcription. In addition to acting as a capsid-specific restriction factor, also acts as a pattern recognition receptor that activates innate immune signaling in response to the retroviral capsid lattice. Binding to the viral capsid triggers its E3 ubiquitin ligase activity, and in concert with the heterodimeric ubiquitin conjugating enzyme complex UBE2V1-UBE2N (also known as UBC13-UEV1A complex) generates 'Lys-63'-linked polyubiquitin chains, which in turn are catalysts in the autophosphorylation of the MAP3K7/TAK1 complex (includes TAK1, TAB2, and TAB3). Activation of the MAP3K7/TAK1 complex by autophosphorylation results in the induction and expression of NF-kappa-B and MAPK-responsive inflammatory genes, thereby leading to an innate immune response in the infected cell. Plays a role in regulating autophagy through activation of autophagy regulator BECN1 by causing its dissociation from its inhibitors BCL2 and TAB2. This Symphalangus syndactylus (Siamang) protein is Tripartite motif-containing protein 5 (TRIM5).